We begin with the raw amino-acid sequence, 225 residues long: Pyrimidine 5'-nucleotidase YjjG (225 aa).

Residue Asp-9 is the Nucleophile of the active site.

This sequence belongs to the HAD-like hydrolase superfamily. YjjG family. In terms of assembly, monomer, homodimer and possibly homotetramer in solution. Mn(2+) is required as a cofactor. It depends on Mg(2+) as a cofactor. The cofactor is Co(2+).

It is found in the cytoplasm. The catalysed reaction is a ribonucleoside 5'-phosphate + H2O = a ribonucleoside + phosphate. The enzyme catalyses a 2'-deoxyribonucleoside 5'-phosphate + H2O = a 2'-deoxyribonucleoside + phosphate. It catalyses the reaction UMP + H2O = uridine + phosphate. It carries out the reaction dUMP + H2O = 2'-deoxyuridine + phosphate. The catalysed reaction is dTMP + H2O = thymidine + phosphate. In contrast to nucleotidases from other families, is not inhibited by ribo- and deoxyribonucleoside di- and triphosphates. Functionally, nucleotidase that shows high phosphatase activity toward non-canonical pyrimidine nucleotides and three canonical nucleoside 5'-monophosphates (UMP, dUMP, and dTMP), and very low activity against TDP, IMP, UDP, GMP, dGMP, AMP, dAMP, and 6-phosphogluconate. Appears to function as a house-cleaning nucleotidase in vivo, since the general nucleotidase activity of YjjG allows it to protect cells against non-canonical pyrimidine derivatives such as 5-fluoro-2'-deoxyuridine, 5-fluorouridine, 5-fluoroorotate, 5-fluorouracil, and 5-aza-2'-deoxycytidine, and prevents the incorporation of potentially mutagenic nucleotides into DNA. Its dUMP phosphatase activity that catalyzes the hydrolysis of dUMP to deoxyuridine is necessary for thymine utilization via the thymine salvage pathway. Is strictly specific to substrates with 5'-phosphates and shows no activity against nucleoside 2'- or 3'-monophosphates. The polypeptide is Pyrimidine 5'-nucleotidase YjjG (yjjG) (Escherichia coli (strain K12)).